Reading from the N-terminus, the 120-residue chain is uncharacterized protein (120 aa).

The segment at 70-109 (CARCRRSLTLTPAVSCLPCGHSCLCTDCDQLFANVCFECK) adopts an RING-type zinc-finger fold.

This is an uncharacterized protein from Orgyia pseudotsugata multicapsid polyhedrosis virus (OpMNPV).